The following is a 305-amino-acid chain: MIKQRTLKRIVQATGVGLHTGKKVTLTLRPAPANTGVIYRRTDLNPPVDFPADAKSVRDTMLCTCLVNEHDVRISTVEHLNAALAGLGIDNIVIEVNAPEIPIMDGSAAPFVYLLLDAGIDELNCAKKFVRIKETVRVEDGDKWAEFKPYNGFSLDFTIDFNHPAIDSSNQRYAMNFSADAFMRQISRARTFGFMRDIEYLQSRGLCLGGSFDCAIVVDDYRVLNEDGLRFEDEFVRHKMLDAIGDLFMCGHNIIGAFTAYKSGHALNNKLLQAVLAKQEAWEYVTFQDDAELPLAFKAPSAVLA.

Histidine 79, histidine 238, and aspartate 242 together coordinate Zn(2+). The active-site Proton donor is histidine 265.

It belongs to the LpxC family. The cofactor is Zn(2+).

The catalysed reaction is a UDP-3-O-[(3R)-3-hydroxyacyl]-N-acetyl-alpha-D-glucosamine + H2O = a UDP-3-O-[(3R)-3-hydroxyacyl]-alpha-D-glucosamine + acetate. It participates in glycolipid biosynthesis; lipid IV(A) biosynthesis; lipid IV(A) from (3R)-3-hydroxytetradecanoyl-[acyl-carrier-protein] and UDP-N-acetyl-alpha-D-glucosamine: step 2/6. In terms of biological role, catalyzes the hydrolysis of UDP-3-O-myristoyl-N-acetylglucosamine to form UDP-3-O-myristoylglucosamine and acetate, the committed step in lipid A biosynthesis. This Shigella dysenteriae serotype 1 (strain Sd197) protein is UDP-3-O-acyl-N-acetylglucosamine deacetylase.